Reading from the N-terminus, the 341-residue chain is tRNA N6-adenosine threonylcarbamoyltransferase (341 aa).

Fe cation contacts are provided by His-111 and His-115. Substrate is bound by residues 134–138, Asp-167, Gly-180, and Asn-276; that span reads LVSGG. Asp-304 is a Fe cation binding site.

It belongs to the KAE1 / TsaD family. Fe(2+) serves as cofactor.

Its subcellular location is the cytoplasm. It carries out the reaction L-threonylcarbamoyladenylate + adenosine(37) in tRNA = N(6)-L-threonylcarbamoyladenosine(37) in tRNA + AMP + H(+). Functionally, required for the formation of a threonylcarbamoyl group on adenosine at position 37 (t(6)A37) in tRNAs that read codons beginning with adenine. Is involved in the transfer of the threonylcarbamoyl moiety of threonylcarbamoyl-AMP (TC-AMP) to the N6 group of A37, together with TsaE and TsaB. TsaD likely plays a direct catalytic role in this reaction. In Pseudomonas putida (strain W619), this protein is tRNA N6-adenosine threonylcarbamoyltransferase.